Reading from the N-terminus, the 321-residue chain is Aspartate carbamoyltransferase catalytic subunit (321 aa).

Carbamoyl phosphate-binding residues include Arg-57 and Thr-58. Lys-85 provides a ligand contact to L-aspartate. Residues Arg-107, His-142, and Gln-145 each contribute to the carbamoyl phosphate site. L-aspartate is bound by residues Arg-175 and Arg-229. Residues Gly-270 and Pro-271 each coordinate carbamoyl phosphate.

It belongs to the aspartate/ornithine carbamoyltransferase superfamily. ATCase family. As to quaternary structure, heterododecamer (2C3:3R2) of six catalytic PyrB chains organized as two trimers (C3), and six regulatory PyrI chains organized as three dimers (R2).

It carries out the reaction carbamoyl phosphate + L-aspartate = N-carbamoyl-L-aspartate + phosphate + H(+). It functions in the pathway pyrimidine metabolism; UMP biosynthesis via de novo pathway; (S)-dihydroorotate from bicarbonate: step 2/3. In terms of biological role, catalyzes the condensation of carbamoyl phosphate and aspartate to form carbamoyl aspartate and inorganic phosphate, the committed step in the de novo pyrimidine nucleotide biosynthesis pathway. The polypeptide is Aspartate carbamoyltransferase catalytic subunit (Mycobacterium leprae (strain TN)).